We begin with the raw amino-acid sequence, 419 residues long: 26S proteasome regulatory subunit 8 homolog B (419 aa).

Gly-202–Thr-209 provides a ligand contact to ATP. Lys-406 is covalently cross-linked (Glycyl lysine isopeptide (Lys-Gly) (interchain with G-Cter in ubiquitin)).

The protein belongs to the AAA ATPase family. In terms of assembly, component of the 19S regulatory particle (RP/PA700) base subcomplex of the 26S proteasome. The 26S proteasome is composed of a core protease (CP), known as the 20S proteasome, capped at one or both ends by the 19S regulatory particle (RP/PA700). The RP/PA700 complex is composed of at least 17 different subunits in two subcomplexes, the base and the lid, which form the portions proximal and distal to the 20S proteolytic core, respectively.

The protein localises to the cytoplasm. Its subcellular location is the nucleus. The 26S proteasome is involved in the ATP-dependent degradation of ubiquitinated proteins. The regulatory (or ATPase) complex confers ATP dependency and substrate specificity to the 26S complex. This Arabidopsis thaliana (Mouse-ear cress) protein is 26S proteasome regulatory subunit 8 homolog B (RPT6B).